We begin with the raw amino-acid sequence, 316 residues long: Lipoyl synthase (316 aa).

7 residues coordinate [4Fe-4S] cluster: Cys-66, Cys-71, Cys-77, Cys-92, Cys-96, Cys-99, and Ser-306. The 218-residue stretch at 78-295 folds into the Radical SAM core domain; that stretch reads FNRGTATFMI…NLIAFDLGFK (218 aa).

It belongs to the radical SAM superfamily. Lipoyl synthase family. [4Fe-4S] cluster is required as a cofactor.

Its subcellular location is the cytoplasm. The catalysed reaction is [[Fe-S] cluster scaffold protein carrying a second [4Fe-4S](2+) cluster] + N(6)-octanoyl-L-lysyl-[protein] + 2 oxidized [2Fe-2S]-[ferredoxin] + 2 S-adenosyl-L-methionine + 4 H(+) = [[Fe-S] cluster scaffold protein] + N(6)-[(R)-dihydrolipoyl]-L-lysyl-[protein] + 4 Fe(3+) + 2 hydrogen sulfide + 2 5'-deoxyadenosine + 2 L-methionine + 2 reduced [2Fe-2S]-[ferredoxin]. Its pathway is protein modification; protein lipoylation via endogenous pathway; protein N(6)-(lipoyl)lysine from octanoyl-[acyl-carrier-protein]: step 2/2. In terms of biological role, catalyzes the radical-mediated insertion of two sulfur atoms into the C-6 and C-8 positions of the octanoyl moiety bound to the lipoyl domains of lipoate-dependent enzymes, thereby converting the octanoylated domains into lipoylated derivatives. The protein is Lipoyl synthase of Wigglesworthia glossinidia brevipalpis.